A 138-amino-acid chain; its full sequence is Large ribosomal subunit protein uL16 (138 aa).

Belongs to the universal ribosomal protein uL16 family. Part of the 50S ribosomal subunit.

Binds 23S rRNA and is also seen to make contacts with the A and possibly P site tRNAs. The protein is Large ribosomal subunit protein uL16 of Chlamydia trachomatis serovar D (strain ATCC VR-885 / DSM 19411 / UW-3/Cx).